We begin with the raw amino-acid sequence, 801 residues long: Cation/H(+) antiporter 28 (801 aa).

The next 12 membrane-spanning stretches (helical) occupy residues 24-44, 77-97, 113-133, 140-160, 179-199, 216-236, 252-272, 275-292, 304-324, 343-363, 371-391, and 403-423; these read ALKILVFIAIFVVRTLLHYLM, SITLNNIIEFGMICHMFVMGL, FIAYTSMITTFVLAFVTTPFL, PYIFSLALSLMASSTGSPILT, AAGVHTDMISTLLYCFGFIFF, LLMFCLFLAQVTFTSIVSPIF, GSHLVMSLAFVVLICSFPTWP, SMYNPILSAFTAGLFLPN, INYLLSTVFYPIFFFWVGFII, LLGTVIAGKVTGTVLCGLLLG, SLGLLLTTKGHFHVYLAALAI, and LIIFIIVFTVVYSPFVVMDII.

It belongs to the monovalent cation:proton antiporter 2 (CPA2) transporter (TC 2.A.37) family. CHX (TC 2.A.37.4) subfamily. In terms of tissue distribution, specifically expressed in pollen.

The protein localises to the membrane. May operate as a cation/H(+) antiporter. This Arabidopsis thaliana (Mouse-ear cress) protein is Cation/H(+) antiporter 28 (CHX28).